The following is an 85-amino-acid chain: Large ribosomal subunit protein bL27 (85 aa).

Residues 1 to 21 form a disordered region; that stretch reads MAHKKAGGSSRNGRDSEGRRL.

Belongs to the bacterial ribosomal protein bL27 family.

This chain is Large ribosomal subunit protein bL27, found in Rhodospirillum rubrum (strain ATCC 11170 / ATH 1.1.1 / DSM 467 / LMG 4362 / NCIMB 8255 / S1).